Consider the following 188-residue polypeptide: Acireductone dioxygenase (188 aa).

H97, H99, E103, and H141 together coordinate Fe(2+). Residues H97, H99, E103, and H141 each coordinate Ni(2+).

Belongs to the acireductone dioxygenase (ARD) family. In terms of assembly, monomer. Fe(2+) is required as a cofactor. The cofactor is Ni(2+).

It carries out the reaction 1,2-dihydroxy-5-(methylsulfanyl)pent-1-en-3-one + O2 = 3-(methylsulfanyl)propanoate + CO + formate + 2 H(+). The catalysed reaction is 1,2-dihydroxy-5-(methylsulfanyl)pent-1-en-3-one + O2 = 4-methylsulfanyl-2-oxobutanoate + formate + 2 H(+). The protein operates within amino-acid biosynthesis; L-methionine biosynthesis via salvage pathway; L-methionine from S-methyl-5-thio-alpha-D-ribose 1-phosphate: step 5/6. Catalyzes 2 different reactions between oxygen and the acireductone 1,2-dihydroxy-3-keto-5-methylthiopentene (DHK-MTPene) depending upon the metal bound in the active site. Fe-containing acireductone dioxygenase (Fe-ARD) produces formate and 2-keto-4-methylthiobutyrate (KMTB), the alpha-ketoacid precursor of methionine in the methionine recycle pathway. Ni-containing acireductone dioxygenase (Ni-ARD) produces methylthiopropionate, carbon monoxide and formate, and does not lie on the methionine recycle pathway. The protein is Acireductone dioxygenase of Xylella fastidiosa (strain M23).